We begin with the raw amino-acid sequence, 51 residues long: Insulin (51 aa).

3 disulfides stabilise this stretch: cysteine 7/cysteine 37, cysteine 19/cysteine 50, and cysteine 36/cysteine 41.

This sequence belongs to the insulin family. As to quaternary structure, heterodimer of a B chain and an A chain linked by two disulfide bonds.

Its subcellular location is the secreted. Its function is as follows. Insulin decreases blood glucose concentration. It increases cell permeability to monosaccharides, amino acids and fatty acids. It accelerates glycolysis, the pentose phosphate cycle, and glycogen synthesis in liver. This chain is Insulin (INS), found in Alligator mississippiensis (American alligator).